The sequence spans 526 residues: Probable lipid II flippase MurJ (526 aa).

14 helical membrane-spanning segments follow: residues 35–55 (LMGTSATADAFTVAFMIPNLF), 58–78 (LFAENAISVAFIPVFTQHYSM), 96–116 (AIFTLMSSVTASISLIGILGA), 137–157 (MFPYLWMISLAAFFQGMLHSI), 160–180 (FVPSGCTPIFFNVSVIFSMYF), 190–210 (IAAAIGVLIGGCAQALFQLIF), 235–255 (IIALLLPTTVGIATYLLNDLV), 281–301 (LLGIFIVSLSSVVLPDLSFHV), 313–333 (LITAIKIVMLITIPATFFVLF), 362–382 (WHSVGMLAIALNRVLISAFYA), 391–411 (IAGTISFVTNIILATLLFIPL), 415–435 (GIAFSLSAASMVQTVFLWMFL), 459–479 (LFSVIALVPTWASSFFTAYFF), and 489–509 (GVPLCVEALIFSCTGCILLLL).

It belongs to the MurJ/MviN family.

The protein resides in the cell inner membrane. It participates in cell wall biogenesis; peptidoglycan biosynthesis. In terms of biological role, involved in peptidoglycan biosynthesis. Transports lipid-linked peptidoglycan precursors from the inner to the outer leaflet of the cytoplasmic membrane. In Treponema pallidum (strain Nichols), this protein is Probable lipid II flippase MurJ.